Consider the following 378-residue polypeptide: Succinyl-diaminopimelate desuccinylase (378 aa).

Histidine 66 is a Zn(2+) binding site. Aspartate 68 is a catalytic residue. Residue aspartate 99 participates in Zn(2+) binding. Glutamate 133 functions as the Proton acceptor in the catalytic mechanism. Zn(2+) contacts are provided by glutamate 134, glutamate 162, and histidine 348.

This sequence belongs to the peptidase M20A family. DapE subfamily. Homodimer. Zn(2+) is required as a cofactor. It depends on Co(2+) as a cofactor.

The catalysed reaction is N-succinyl-(2S,6S)-2,6-diaminopimelate + H2O = (2S,6S)-2,6-diaminopimelate + succinate. The protein operates within amino-acid biosynthesis; L-lysine biosynthesis via DAP pathway; LL-2,6-diaminopimelate from (S)-tetrahydrodipicolinate (succinylase route): step 3/3. Functionally, catalyzes the hydrolysis of N-succinyl-L,L-diaminopimelic acid (SDAP), forming succinate and LL-2,6-diaminopimelate (DAP), an intermediate involved in the bacterial biosynthesis of lysine and meso-diaminopimelic acid, an essential component of bacterial cell walls. The sequence is that of Succinyl-diaminopimelate desuccinylase from Halorhodospira halophila (strain DSM 244 / SL1) (Ectothiorhodospira halophila (strain DSM 244 / SL1)).